A 343-amino-acid polypeptide reads, in one-letter code: ATP-dependent (S)-NAD(P)H-hydrate dehydratase (343 aa).

A mitochondrion-targeting transit peptide spans 1–42 (MAVHACGAAAAVVALLSAAIALQWSPLYAVLQRALSLHTAHA). Residues 49–340 (LFQLVRNIVP…TEVGTAFSRL (292 aa)) form the YjeF C-terminal domain. Lysine 63 carries the post-translational modification N6-acetyllysine. Residue tyrosine 81 is modified to Phosphotyrosine. (6S)-NADPHX contacts are provided by residues glycine 149 and 202–208 (NHVEFSR). Position 216 is a phosphoserine (serine 216). ATP contacts are provided by residues 242-246 (KGEQD) and 261-270 (GSSRRCGGQG). Aspartate 271 is a (6S)-NADPHX binding site.

It belongs to the NnrD/CARKD family. Mg(2+) is required as a cofactor.

The protein localises to the mitochondrion. It carries out the reaction (6S)-NADHX + ATP = ADP + phosphate + NADH + H(+). It catalyses the reaction (6S)-NADPHX + ATP = ADP + phosphate + NADPH + H(+). In terms of biological role, catalyzes the dehydration of the S-form of NAD(P)HX at the expense of ATP, which is converted to ADP. Together with NAD(P)HX epimerase, which catalyzes the epimerization of the S- and R-forms, the enzyme allows the repair of both epimers of NAD(P)HX, a damaged form of NAD(P)H that is a result of enzymatic or heat-dependent hydration. The sequence is that of ATP-dependent (S)-NAD(P)H-hydrate dehydratase from Mus musculus (Mouse).